Reading from the N-terminus, the 148-residue chain is Coactosin (148 aa).

Residues 1 to 134 form the ADF-H domain; sequence MSGFDLSEVA…VEDEIAAKIK (134 aa). The short motif at 71 to 76 is the F-loop; important for stable binding to G-actin and F-actin element; that stretch reads DEESKR. Phosphoserine is present on S147.

The protein belongs to the actin-binding proteins ADF family. Coactosin subfamily. As to quaternary structure, interacts with 14-3-3 protein 3. In terms of processing, phosphorylation at Ser-147 appears not to affect its binding to actin; however, it may regulate phagocytosis and motility.

The protein localises to the cytoplasm. The protein resides in the cell projection. It localises to the phagocytic cup. Its subcellular location is the pseudopodium. It is found in the cell membrane. The protein localises to the cytoskeleton. In terms of biological role, actin-binding protein which is involved in F-actin stabilization. May play a role during phagocytosis and pseudopod formation by contributing to the maintenance of F-actin. The polypeptide is Coactosin (Entamoeba histolytica (strain ATCC 30459 / HM-1:IMSS / ABRM)).